A 540-amino-acid chain; its full sequence is GMP synthase [glutamine-hydrolyzing] (540 aa).

The 191-residue stretch at 26–216 (LIIILDFGSQ…VYHICDCEPT (191 aa)) folds into the Glutamine amidotransferase type-1 domain. Residue cysteine 103 is the Nucleophile of the active site. Residues histidine 190 and glutamate 192 contribute to the active site. The GMPS ATP-PPase domain maps to 217–415 (WTTAAFVEEA…IGLPEEIVQR (199 aa)). 244 to 250 (SGGVDSS) contributes to the ATP binding site.

As to quaternary structure, homodimer.

It catalyses the reaction XMP + L-glutamine + ATP + H2O = GMP + L-glutamate + AMP + diphosphate + 2 H(+). The protein operates within purine metabolism; GMP biosynthesis; GMP from XMP (L-Gln route): step 1/1. Functionally, catalyzes the synthesis of GMP from XMP. This Nostoc punctiforme (strain ATCC 29133 / PCC 73102) protein is GMP synthase [glutamine-hydrolyzing].